Consider the following 341-residue polypeptide: Probable sulfurtransferase (341 aa).

Positions 40, 42, 58, and 61 each coordinate Zn(2+). G88 contributes to the ATP binding site. [4Fe-4S] cluster contacts are provided by C176 and C179. ATP is bound by residues R183 and G202. Residue C267 coordinates [4Fe-4S] cluster. Zn(2+) contacts are provided by C316, C319, C328, and C331.

This sequence belongs to the TtcA family. [4Fe-4S] cluster is required as a cofactor. It depends on Mg(2+) as a cofactor.

This is Probable sulfurtransferase from Methanocaldococcus jannaschii (strain ATCC 43067 / DSM 2661 / JAL-1 / JCM 10045 / NBRC 100440) (Methanococcus jannaschii).